Consider the following 486-residue polypeptide: Membrane-bound lytic murein transglycosylase F (486 aa).

Residues 1 to 29 (MFSPTALRPRYAKWLIATGLFLMLSGCVD) form the signal peptide. The non-LT domain stretch occupies residues 30–267 (KPNTLERVKE…RLKDRYYGHV (238 aa)). Residues 268-486 (DVLGYMGATT…SKPAQEPAPL (219 aa)) are LT domain. The active site involves Glu314.

It in the N-terminal section; belongs to the bacterial solute-binding protein 3 family. This sequence in the C-terminal section; belongs to the transglycosylase Slt family.

It is found in the cell outer membrane. The enzyme catalyses Exolytic cleavage of the (1-&gt;4)-beta-glycosidic linkage between N-acetylmuramic acid (MurNAc) and N-acetylglucosamine (GlcNAc) residues in peptidoglycan, from either the reducing or the non-reducing ends of the peptidoglycan chains, with concomitant formation of a 1,6-anhydrobond in the MurNAc residue.. Its function is as follows. Murein-degrading enzyme that degrades murein glycan strands and insoluble, high-molecular weight murein sacculi, with the concomitant formation of a 1,6-anhydromuramoyl product. Lytic transglycosylases (LTs) play an integral role in the metabolism of the peptidoglycan (PG) sacculus. Their lytic action creates space within the PG sacculus to allow for its expansion as well as for the insertion of various structures such as secretion systems and flagella. The sequence is that of Membrane-bound lytic murein transglycosylase F from Pseudomonas fluorescens (strain Pf0-1).